The sequence spans 254 residues: Glutamate racemase (254 aa).

Substrate-binding positions include 7-8 (DS) and 39-40 (YG). The active-site Proton donor/acceptor is the cysteine 70. A substrate-binding site is contributed by 71–72 (NT). Cysteine 178 acts as the Proton donor/acceptor in catalysis. Residue 179–180 (TH) participates in substrate binding.

This sequence belongs to the aspartate/glutamate racemases family.

The enzyme catalyses L-glutamate = D-glutamate. It participates in cell wall biogenesis; peptidoglycan biosynthesis. In terms of biological role, provides the (R)-glutamate required for cell wall biosynthesis. The sequence is that of Glutamate racemase from Aquifex aeolicus (strain VF5).